The primary structure comprises 109 residues: Sulredoxin (109 aa).

In terms of domain architecture, Rieske spans 3–107; the sequence is WKRTISAKAL…IRDNNGWIEV (105 aa). [2Fe-2S] cluster contacts are provided by C43, H45, C62, and H65.

Homooligomeric. [2Fe-2S] cluster serves as cofactor.

Its subcellular location is the cytoplasm. Not yet known. The protein is Sulredoxin (sdx) of Sulfurisphaera tokodaii (strain DSM 16993 / JCM 10545 / NBRC 100140 / 7) (Sulfolobus tokodaii).